A 551-amino-acid polypeptide reads, in one-letter code: HTH-type transcriptional regulator SgrR (551 aa).

The region spanning 1–116 (MPSARLQQQF…LVSHLGRSFR (116 aa)) is the HTH marR-type domain. Residues 26–49 (LNELAALLSCSRRHMRTLLNTMQD) constitute a DNA-binding region (H-T-H motif). The interval 163 to 492 (ELEADIAHHW…IDWQADAARW (330 aa)) is solute-binding.

Activates the small RNA gene sgrS under glucose-phosphate stress conditions as well as yfdZ. Represses its own transcription under both stress and non-stress conditions. Might act as a sensor of the intracellular accumulation of phosphoglucose by binding these molecules in its C-terminal solute-binding domain. In Shigella boydii serotype 4 (strain Sb227), this protein is HTH-type transcriptional regulator SgrR.